The chain runs to 458 residues: Chromosomal replication initiator protein DnaA (458 aa).

The segment at 1 to 93 is domain I, interacts with DnaA modulators; that stretch reads MKTELSEVWQ…NVIEDPAAEP (93 aa). The interval 94–119 is domain II; the sequence is VDAPNVADLPAGTSAPAAEQNARLLG. The interval 120 to 336 is domain III, AAA+ region; the sequence is YINPKYTFET…GALTRVVAYA (217 aa). 4 residues coordinate ATP: Gly164, Gly166, Lys167, and Thr168. Positions 337–458 are domain IV, binds dsDNA; sequence NMLKCPLTYD…EQLIARIRAE (122 aa).

It belongs to the DnaA family. As to quaternary structure, oligomerizes as a right-handed, spiral filament on DNA at oriC.

The protein resides in the cytoplasm. Plays an essential role in the initiation and regulation of chromosomal replication. ATP-DnaA binds to the origin of replication (oriC) to initiate formation of the DNA replication initiation complex once per cell cycle. Binds the DnaA box (a 9 base pair repeat at the origin) and separates the double-stranded (ds)DNA. Forms a right-handed helical filament on oriC DNA; dsDNA binds to the exterior of the filament while single-stranded (ss)DNA is stabiized in the filament's interior. The ATP-DnaA-oriC complex binds and stabilizes one strand of the AT-rich DNA unwinding element (DUE), permitting loading of DNA polymerase. After initiation quickly degrades to an ADP-DnaA complex that is not apt for DNA replication. Binds acidic phospholipids. In Symbiobacterium thermophilum (strain DSM 24528 / JCM 14929 / IAM 14863 / T), this protein is Chromosomal replication initiator protein DnaA.